The following is a 124-amino-acid chain: Small ribosomal subunit protein uS12 (124 aa).

2 disordered regions span residues 9–32 (RKGRRDKVAKTKTAALKGSPQRRG) and 105–124 (QGVKNRKQARSRYGAKKEKS). Residues 108–118 (KNRKQARSRYG) are compositionally biased toward basic residues.

This sequence belongs to the universal ribosomal protein uS12 family. In terms of assembly, part of the 30S ribosomal subunit. Contacts proteins S8 and S17. May interact with IF1 in the 30S initiation complex.

Its function is as follows. With S4 and S5 plays an important role in translational accuracy. Interacts with and stabilizes bases of the 16S rRNA that are involved in tRNA selection in the A site and with the mRNA backbone. Located at the interface of the 30S and 50S subunits, it traverses the body of the 30S subunit contacting proteins on the other side and probably holding the rRNA structure together. The combined cluster of proteins S8, S12 and S17 appears to hold together the shoulder and platform of the 30S subunit. The polypeptide is Small ribosomal subunit protein uS12 (Nocardia farcinica (strain IFM 10152)).